A 261-amino-acid chain; its full sequence is Calcium-binding protein 8 (261 aa).

The segment at 1–39 (MRLPEQPGEGKPENEKKGDGGALGGGEEPPRSQAPDFPT) is disordered. Topologically, residues 1–234 (MRLPEQPGEG…QNRQTCVRKS (234 aa)) are cytoplasmic. The span at 8-19 (GEGKPENEKKGD) shows a compositional bias: basic and acidic residues. 2 consecutive EF-hand domains span residues 78–113 (EELDEIREAFRVLDRDGNGFISKQELGMAMRSLGYM) and 114–149 (PSEVELAIIMQRLDMDGDGQVDFDEFMTILGPKLVS). Ca(2+)-binding residues include D91, D93, N95, E102, D127, D129, D131, Q133, and E138. Residues 235–255 (LICAFAMAFIISVMLIAANQI) traverse the membrane as a helical; Anchor for type IV membrane protein segment. Topologically, residues 256–261 (LRSGME) are extracellular.

Interacts with PI4KB. This binding competes with FREQ/NCS1 binding in a calcium-dependent manner. Brain specific.

It is found in the golgi apparatus. The protein localises to the trans-Golgi network membrane. The protein resides in the cytoplasm. Its subcellular location is the perinuclear region. It localises to the cell membrane. Negatively regulates Golgi-to-plasma membrane trafficking by interacting with PI4KB and inhibiting its activity. May play a role in the physiology of neurons and is potentially important in memory and learning. This Homo sapiens (Human) protein is Calcium-binding protein 8 (CALN1).